The following is a 338-amino-acid chain: Aspartate carbamoyltransferase catalytic subunit (338 aa).

Carbamoyl phosphate is bound by residues R59 and T60. Position 87 (K87) interacts with L-aspartate. Positions 109, 142, and 145 each coordinate carbamoyl phosphate. Residues R182 and R253 each contribute to the L-aspartate site. Carbamoyl phosphate is bound by residues G294 and P295.

The protein belongs to the aspartate/ornithine carbamoyltransferase superfamily. ATCase family. In terms of assembly, heterododecamer (2C3:3R2) of six catalytic PyrB chains organized as two trimers (C3), and six regulatory PyrI chains organized as three dimers (R2).

The enzyme catalyses carbamoyl phosphate + L-aspartate = N-carbamoyl-L-aspartate + phosphate + H(+). Its pathway is pyrimidine metabolism; UMP biosynthesis via de novo pathway; (S)-dihydroorotate from bicarbonate: step 2/3. Its function is as follows. Catalyzes the condensation of carbamoyl phosphate and aspartate to form carbamoyl aspartate and inorganic phosphate, the committed step in the de novo pyrimidine nucleotide biosynthesis pathway. The chain is Aspartate carbamoyltransferase catalytic subunit from Prochlorococcus marinus subsp. pastoris (strain CCMP1986 / NIES-2087 / MED4).